The chain runs to 963 residues: Ubiquitin carboxyl-terminal hydrolase 11 (963 aa).

Residues 64–93 (VTEDREPQHEELPGLDSQWRQIENGESGRE) are disordered. Positions 65–75 (TEDREPQHEEL) are enriched in basic and acidic residues. The 109-residue stretch at 76-184 (PGLDSQWRQI…GQPPIERKVI (109 aa)) folds into the DUSP domain. Position 245 is an N6-acetyllysine (K245). The USP domain occupies 309–930 (CGLTNLGNTC…AAYVLFYQRQ (622 aa)). The active-site Nucleophile is C318. Disordered stretches follow at residues 644–691 (TKPN…SGVT) and 716–735 (LFTL…TSPE). S648 is modified (phosphoserine). A compositionally biased stretch (acidic residues) spans 649–665 (DDEDDGDEKEDDEEDKD). The span at 717-731 (FTLQTVNSNGTSDRT) shows a compositional bias: polar residues. A Phosphoserine modification is found at S733. The Proton acceptor role is filled by H888. Low complexity predominate over residues 938–957 (SPAGSSGAPASPACSSPPSS). The interval 938–963 (SPAGSSGAPASPACSSPPSSEFMDVN) is disordered. S948 is modified (phosphoserine).

The protein belongs to the peptidase C19 family. As to quaternary structure, monomer. Associated component of the Polycomb group (PcG) multiprotein PRC1-like complex. Interacts with RANBP9/RANBPM. Interacts with BRCA2. Interacts with CHUK/IKKA. Interacts with NFKBIA. Interacts with SPRY3, RAE1, MYCBP2/PAM, and KCTD6. (Microbial infection) Interacts with papilloma virus protein 16E7.

The protein localises to the nucleus. Its subcellular location is the cytoplasm. The protein resides in the chromosome. It catalyses the reaction Thiol-dependent hydrolysis of ester, thioester, amide, peptide and isopeptide bonds formed by the C-terminal Gly of ubiquitin (a 76-residue protein attached to proteins as an intracellular targeting signal).. In terms of biological role, protease that can remove conjugated ubiquitin from target proteins and polyubiquitin chains. Inhibits the degradation of target proteins by the proteasome. Cleaves preferentially 'Lys-6' and 'Lys-63'-linked ubiquitin chains. Has lower activity with 'Lys-11' and 'Lys-33'-linked ubiquitin chains, and extremely low activity with 'Lys-27', 'Lys-29' and 'Lys-48'-linked ubiquitin chains (in vitro). Plays a role in the regulation of pathways leading to NF-kappa-B activation. Plays a role in the regulation of DNA repair after double-stranded DNA breaks. Acts as a chromatin regulator via its association with the Polycomb group (PcG) multiprotein PRC1-like complex; may act by deubiquitinating components of the PRC1-like complex. Promotes cell proliferation by deubiquitinating phosphorylated E2F1. The sequence is that of Ubiquitin carboxyl-terminal hydrolase 11 (USP11) from Homo sapiens (Human).